A 488-amino-acid chain; its full sequence is GTPase Der (488 aa).

EngA-type G domains are found at residues 3–166 and 200–373; these read PVVA…AEAM and IKLA…DSAT. GTP is bound by residues 9 to 16, 56 to 60, 118 to 121, 206 to 213, 253 to 257, and 318 to 321; these read GRPNVGKS, DTGGI, NKVD, GKPNVGKS, DTAGV, and NKWD. Residues 374 to 458 form the KH-like domain; that stretch reads RRVSTSMLTR…PIQLRFHEGD (85 aa).

The protein belongs to the TRAFAC class TrmE-Era-EngA-EngB-Septin-like GTPase superfamily. EngA (Der) GTPase family. Associates with the 50S ribosomal subunit.

GTPase that plays an essential role in the late steps of ribosome biogenesis. This Shewanella amazonensis (strain ATCC BAA-1098 / SB2B) protein is GTPase Der.